The following is a 1081-amino-acid chain: Dyslexia-associated protein KIAA0319 homolog (1081 aa).

The N-terminal stretch at 1–22 (MVSPPGVLSSLLLLAAMAGGSS) is a signal peptide. An MANSC domain is found at 23-99 (QQCSEGRTYS…PRTTGPIRSY (77 aa)). The Extracellular portion of the chain corresponds to 23–964 (QQCSEGRTYS…WDGESNCEWS (942 aa)). A disordered region spans residues 168 to 331 (LQPSNQQDPR…VLTGLTPPPW (164 aa)). N196 is a glycosylation site (N-linked (GlcNAc...) asparagine). Composition is skewed to polar residues over residues 197–206 (ATATGDNSAA) and 222–234 (EQLQALNESTWSP). N228 is a glycosylation site (N-linked (GlcNAc...) asparagine). Residues 236 to 255 (PGHSSISSVWPSSASPLPTE) show a composition bias toward low complexity. Residues N272 and N302 are each glycosylated (N-linked (GlcNAc...) asparagine). Polar residues-rich tracts occupy residues 283 to 307 (HNPSPASLESSPATTEKNSNFTVTP) and 314 to 324 (TPTFPTSTVLT). PKD domains are found at residues 345-436 (AVSA…VMPA), 444-533 (VAVV…IRDA), 539-629 (VANA…VQAE), 630-723 (NNQA…VKKE), and 729-820 (RAQA…VLPD). 5 N-linked (GlcNAc...) asparagine glycosylation sites follow: N430, N507, N522, N545, and N560. A glycan (N-linked (GlcNAc...) asparagine) is linked at N742. The chain crosses the membrane as a helical span at residues 965-985 (VFYVAALALTLTLLTGAVSWL). Residues 986-1081 (CICCCRRRKR…VSFGYYSKDR (96 aa)) are Cytoplasmic-facing. Positions 1004–1007 (YTIL) match the Endocytosis signal motif. Residue S1009 is modified to Phosphoserine.

As to quaternary structure, homodimer. Interacts with AP2M1; required for clathrin-mediated endocytosis. In terms of processing, N-glycosylated. O-glycosylated. Post-translationally, shedding of the extracellular domain and intramembrane cleavage produce several proteolytic products. The intramembrane cleavage releases a soluble cytoplasmic polypeptide that translocates to the nucleolus.

It localises to the cell membrane. The protein resides in the early endosome membrane. Its function is as follows. Involved in neuronal migration during development of the cerebral neocortex. May function in a cell autonomous and a non-cell autonomous manner and play a role in appropriate adhesion between migrating neurons and radial glial fibers. May also regulate growth and differentiation of dendrites. This chain is Dyslexia-associated protein KIAA0319 homolog (Kiaa0319), found in Mus musculus (Mouse).